The primary structure comprises 573 residues: 2-isopropylmalate synthase (573 aa).

The region spanning 37–314 is the Pyruvate carboxyltransferase domain; that stretch reads PRWLSTDLRD…DPQIDFSNID (278 aa). 4 residues coordinate Mg(2+): Asp-46, His-253, His-255, and Asn-289. A regulatory domain region spans residues 456 to 573; sequence NPRNPWGRIQ…VVSAVNRAAR (118 aa).

This sequence belongs to the alpha-IPM synthase/homocitrate synthase family. LeuA type 2 subfamily. Homodimer. Requires Mg(2+) as cofactor.

It is found in the cytoplasm. It carries out the reaction 3-methyl-2-oxobutanoate + acetyl-CoA + H2O = (2S)-2-isopropylmalate + CoA + H(+). It participates in amino-acid biosynthesis; L-leucine biosynthesis; L-leucine from 3-methyl-2-oxobutanoate: step 1/4. Catalyzes the condensation of the acetyl group of acetyl-CoA with 3-methyl-2-oxobutanoate (2-ketoisovalerate) to form 3-carboxy-3-hydroxy-4-methylpentanoate (2-isopropylmalate). This Streptomyces avermitilis (strain ATCC 31267 / DSM 46492 / JCM 5070 / NBRC 14893 / NCIMB 12804 / NRRL 8165 / MA-4680) protein is 2-isopropylmalate synthase.